The following is a 160-amino-acid chain: SsrA-binding protein (160 aa).

Residues 131–160 form a disordered region; that stretch reads KKEYDKRDTERERDAGRELQRAVRNKGKED.

The protein belongs to the SmpB family.

Its subcellular location is the cytoplasm. Required for rescue of stalled ribosomes mediated by trans-translation. Binds to transfer-messenger RNA (tmRNA), required for stable association of tmRNA with ribosomes. tmRNA and SmpB together mimic tRNA shape, replacing the anticodon stem-loop with SmpB. tmRNA is encoded by the ssrA gene; the 2 termini fold to resemble tRNA(Ala) and it encodes a 'tag peptide', a short internal open reading frame. During trans-translation Ala-aminoacylated tmRNA acts like a tRNA, entering the A-site of stalled ribosomes, displacing the stalled mRNA. The ribosome then switches to translate the ORF on the tmRNA; the nascent peptide is terminated with the 'tag peptide' encoded by the tmRNA and targeted for degradation. The ribosome is freed to recommence translation, which seems to be the essential function of trans-translation. This chain is SsrA-binding protein, found in Pseudomonas fluorescens (strain Pf0-1).